Consider the following 396-residue polypeptide: Gap junction gamma-1 protein (396 aa).

Residues 1-18 lie on the Cytoplasmic side of the membrane; sequence MSWSFLTRLLEEIHNHST. Residues 19–39 traverse the membrane as a helical segment; it reads FVGKIWLTVLIVFRIVLTAVG. Over 40 to 75 the chain is Extracellular; sequence GESIYYDEQSKFVCNTEQPGCENVCYDAFAPLSHVR. Residues 76–96 form a helical membrane-spanning segment; sequence FWVFQIILVATPSVMYLGYAI. The Cytoplasmic segment spans residues 97 to 175; the sequence is HKIAKMEHGE…RRIREDGLMK (79 aa). The segment at 145-165 is disordered; it reads ELESEKENKEQSQPKPKHDGR. The segment covering 147–156 has biased composition (basic and acidic residues); that stretch reads ESEKENKEQS. A helical transmembrane segment spans residues 176 to 198; that stretch reads IYVLQLLARTVFEVGFLIGQYFL. The Extracellular portion of the chain corresponds to 199-229; it reads YGFQVHPFYVCSRLPCPHKIDCFISRPTEKT. Residues 230–250 form a helical membrane-spanning segment; that stretch reads IFLLIMYGVTGLCLLLNIWEM. Topologically, residues 251 to 396 are cytoplasmic; the sequence is LHLGFGTIRD…SGDGKTSVWI (146 aa). The stretch at 303–358 forms a coiled coil; it reads ELSNAKIAYKQNKANIAQEQQYGSHEEHLPADLETLQREIRMAQERLDLAIQAYHH. Residues 357–396 are disordered; that stretch reads HHQNNPHGPREKKAKVGSKSGSNKSSISSKSGDGKTSVWI. The span at 373 to 396 shows a compositional bias: low complexity; that stretch reads GSKSGSNKSSISSKSGDGKTSVWI.

This sequence belongs to the connexin family. Gamma-type subfamily. In terms of assembly, a connexon is composed of a hexamer of connexins. Interacts with CNST.

It localises to the cell membrane. It is found in the cell junction. The protein localises to the gap junction. Functionally, one gap junction consists of a cluster of closely packed pairs of transmembrane channels, the connexons, through which materials of low MW diffuse from one cell to a neighboring cell. In Cricetulus griseus (Chinese hamster), this protein is Gap junction gamma-1 protein (GJC1).